The chain runs to 52 residues: Repressor-like protein SSo7c3 (52 aa).

Residues 4 to 51 (EEVVKVSRNYQVTIPAKVRQKFPVKEGDLVKVIYDENGGVVKIQILDS) enclose the SpoVT-AbrB domain.

The polypeptide is Repressor-like protein SSo7c3 (Saccharolobus solfataricus (strain ATCC 35092 / DSM 1617 / JCM 11322 / P2) (Sulfolobus solfataricus)).